Here is a 1180-residue protein sequence, read N- to C-terminus: DNA-directed RNA polymerase subunit beta (1180 aa).

A compositionally biased stretch (acidic residues) spans 1154–1164 (EMKELDDEDEQ). The disordered stretch occupies residues 1154-1180 (EMKELDDEDEQASDKLNLNIDSTESNV). Polar residues predominate over residues 1167-1180 (DKLNLNIDSTESNV).

The protein belongs to the RNA polymerase beta chain family. In terms of assembly, the RNAP catalytic core consists of 2 alpha, 1 beta, 1 beta' and 1 omega subunit. When a sigma factor is associated with the core the holoenzyme is formed, which can initiate transcription.

It catalyses the reaction RNA(n) + a ribonucleoside 5'-triphosphate = RNA(n+1) + diphosphate. DNA-dependent RNA polymerase catalyzes the transcription of DNA into RNA using the four ribonucleoside triphosphates as substrates. This chain is DNA-directed RNA polymerase subunit beta, found in Halalkalibacterium halodurans (strain ATCC BAA-125 / DSM 18197 / FERM 7344 / JCM 9153 / C-125) (Bacillus halodurans).